We begin with the raw amino-acid sequence, 585 residues long: A-type ATP synthase subunit A (585 aa).

231-238 provides a ligand contact to ATP; the sequence is GPFGSGKT.

It belongs to the ATPase alpha/beta chains family. Has multiple subunits with at least A(3), B(3), C, D, E, F, H, I and proteolipid K(x).

It is found in the cell membrane. It catalyses the reaction ATP + H2O + 4 H(+)(in) = ADP + phosphate + 5 H(+)(out). Its function is as follows. Produces ATP from ADP in the presence of a proton gradient across the membrane. The archaeal alpha chain is a catalytic subunit. Functionally, component of the A-type ATP synthase that produces ATP from ADP in the presence of a proton gradient across the membrane. The A chain is the catalytic subunit. This is A-type ATP synthase subunit A from Thermococcus kodakarensis (strain ATCC BAA-918 / JCM 12380 / KOD1) (Pyrococcus kodakaraensis (strain KOD1)).